The chain runs to 502 residues: Zinc finger C3HC-type protein 1 (502 aa).

A2 carries the N-acetylalanine modification. S24 bears the Phosphoserine mark. Residue T28 is modified to Phosphothreonine. The segment at 36–73 (IDEGIAPEEGGVDAKDTSATSQSVNGSPQAEQPSLEST) is disordered. Positions 52–72 (TSATSQSVNGSPQAEQPSLES) are enriched in polar residues. Phosphoserine occurs at positions 58 and 62. At T84 the chain carries Phosphothreonine. Residues 102-156 (CAKYGWVTVECDMLKCSSCQAFLCASLQPAFDFDRYKQRCAELKKALCTAHEKFC) form a C3HC-type zinc finger. The interval 170–210 (LPLDEPAILVSEFLDRFQSLCHLDLQLPSLRPEDLKTMCLT) is F-box-like. Residues 302–423 (SSPIPGLEGR…SSRSFFDPTS (122 aa)) are disordered. Residues S321 and S329 each carry the phosphoserine modification. Residues 327–338 (TRSQDATFSPGS) are compositionally biased toward polar residues. T333 carries the post-translational modification Phosphothreonine. Phosphoserine occurs at positions 335, 338, 344, 354, 359, and 370. Residues 351-360 (RTRSWDSSSP) show a composition bias toward polar residues. The segment covering 371–380 (PTTRTRPVTR) has biased composition (low complexity). S381 is modified (phosphoserine). Phosphothreonine occurs at positions 384 and 387. Phosphoserine is present on S395. The Nuclear localization signal signature appears at 396–402 (PLRKAKR). A phosphoserine mark is found at S407 and S483. Residues 407 to 422 (SSSSSDTSSRSFFDPT) show a composition bias toward low complexity.

In terms of assembly, interacts with TPR; this interaction mediates ZC3HC1 nuclear envelopes (NE)-association but also required for proper positioning of a substantial amount of TPR at the nuclear basket (NB). In terms of processing, phosphorylated. May also be weakly phosphorylated on Tyr residues. In terms of tissue distribution, widely expressed. Highly expressed in heart, skeletal muscle and testis. Expressed in brain, placenta, lung, kidney, liver, pancreas, spleen, thymus, prostate, ovary small intestine and colon. Weakly or not expressed in leukocytes.

It is found in the nucleus. The protein localises to the nucleus envelope. Its function is as follows. Required for proper positioning of a substantial amount of TPR at the nuclear basket (NB) through interaction with TPR. The polypeptide is Zinc finger C3HC-type protein 1 (Homo sapiens (Human)).